The following is a 171-amino-acid chain: Galectin-related protein (171 aa).

Residues 38–170 (PFCGHIKGGM…INGDLQLTKL (133 aa)) enclose the Galectin domain.

Does not bind lactose, and may not bind carbohydrates. This Xenopus tropicalis (Western clawed frog) protein is Galectin-related protein (lgalsl).